The sequence spans 102 residues: UPF0213 protein XAC3202 (102 aa).

Residues 5-80 (KPWHLYLLLC…KRLPRARKLA (76 aa)) form the GIY-YIG domain.

This sequence belongs to the UPF0213 family.

The polypeptide is UPF0213 protein XAC3202 (Xanthomonas axonopodis pv. citri (strain 306)).